We begin with the raw amino-acid sequence, 96 residues long: Aspartyl/glutamyl-tRNA(Asn/Gln) amidotransferase subunit C (96 aa).

It belongs to the GatC family. In terms of assembly, heterotrimer of A, B and C subunits.

The catalysed reaction is L-glutamyl-tRNA(Gln) + L-glutamine + ATP + H2O = L-glutaminyl-tRNA(Gln) + L-glutamate + ADP + phosphate + H(+). The enzyme catalyses L-aspartyl-tRNA(Asn) + L-glutamine + ATP + H2O = L-asparaginyl-tRNA(Asn) + L-glutamate + ADP + phosphate + 2 H(+). Functionally, allows the formation of correctly charged Asn-tRNA(Asn) or Gln-tRNA(Gln) through the transamidation of misacylated Asp-tRNA(Asn) or Glu-tRNA(Gln) in organisms which lack either or both of asparaginyl-tRNA or glutaminyl-tRNA synthetases. The reaction takes place in the presence of glutamine and ATP through an activated phospho-Asp-tRNA(Asn) or phospho-Glu-tRNA(Gln). This Deinococcus deserti (strain DSM 17065 / CIP 109153 / LMG 22923 / VCD115) protein is Aspartyl/glutamyl-tRNA(Asn/Gln) amidotransferase subunit C.